A 260-amino-acid polypeptide reads, in one-letter code: Cytochrome c oxidase subunit 2 (260 aa).

Topologically, residues 1–43 (MILRLLECRFFTIALCDAAEPWQLGFQDAATPMMQGIIDLHHD) are mitochondrial intermembrane. The chain crosses the membrane as a helical span at residues 44–64 (IFFFLILILVFVLWMLVRALW). Topologically, residues 65-84 (HFNEQTNPIPQRIVHGTTIE) are mitochondrial matrix. A helical membrane pass occupies residues 85–105 (IIWTIFPSVILLFIAIPSFAL). At 106-260 (LYSMDGVLVD…VSNQLILQTN (155 aa)) the chain is on the mitochondrial intermembrane side. H189, C224, E226, C228, H232, and M235 together coordinate Cu cation. E226 lines the Mg(2+) pocket.

It belongs to the cytochrome c oxidase subunit 2 family. Component of the cytochrome c oxidase (complex IV, CIV), a multisubunit enzyme composed of a catalytic core of 3 subunits and several supernumerary subunits. The complex exists as a monomer or a dimer and forms supercomplexes (SCs) in the inner mitochondrial membrane with ubiquinol-cytochrome c oxidoreductase (cytochrome b-c1 complex, complex III, CIII). Requires Cu cation as cofactor.

The protein localises to the mitochondrion inner membrane. The enzyme catalyses 4 Fe(II)-[cytochrome c] + O2 + 8 H(+)(in) = 4 Fe(III)-[cytochrome c] + 2 H2O + 4 H(+)(out). In terms of biological role, component of the cytochrome c oxidase, the last enzyme in the mitochondrial electron transport chain which drives oxidative phosphorylation. The respiratory chain contains 3 multisubunit complexes succinate dehydrogenase (complex II, CII), ubiquinol-cytochrome c oxidoreductase (cytochrome b-c1 complex, complex III, CIII) and cytochrome c oxidase (complex IV, CIV), that cooperate to transfer electrons derived from NADH and succinate to molecular oxygen, creating an electrochemical gradient over the inner membrane that drives transmembrane transport and the ATP synthase. Cytochrome c oxidase is the component of the respiratory chain that catalyzes the reduction of oxygen to water. Electrons originating from reduced cytochrome c in the intermembrane space (IMS) are transferred via the dinuclear copper A center (CU(A)) of subunit 2 and heme A of subunit 1 to the active site in subunit 1, a binuclear center (BNC) formed by heme A3 and copper B (CU(B)). The BNC reduces molecular oxygen to 2 water molecules using 4 electrons from cytochrome c in the IMS and 4 protons from the mitochondrial matrix. The protein is Cytochrome c oxidase subunit 2 (COX2) of Zea mays (Maize).